The chain runs to 203 residues: Glycerol-3-phosphate acyltransferase (203 aa).

4 helical membrane passes run 4–24 (LVLLIIIGAYLLGSISSAVLI), 80–100 (PFLLGIIGIAACLGHIYPIFF), 116–136 (APIGWDLSGMLIGTWLLTVFI), and 138–158 (GYSSLGSLITALAAPLLTWFV).

Belongs to the PlsY family. In terms of assembly, probably interacts with PlsX.

It is found in the cell inner membrane. It carries out the reaction an acyl phosphate + sn-glycerol 3-phosphate = a 1-acyl-sn-glycero-3-phosphate + phosphate. The protein operates within lipid metabolism; phospholipid metabolism. In terms of biological role, catalyzes the transfer of an acyl group from acyl-phosphate (acyl-PO(4)) to glycerol-3-phosphate (G3P) to form lysophosphatidic acid (LPA). This enzyme utilizes acyl-phosphate as fatty acyl donor, but not acyl-CoA or acyl-ACP. The chain is Glycerol-3-phosphate acyltransferase from Photobacterium profundum (strain SS9).